A 209-amino-acid polypeptide reads, in one-letter code: Orotate phosphoribosyltransferase (209 aa).

5-phospho-alpha-D-ribose 1-diphosphate contacts are provided by residues Arg96, Lys100, His102, and 122–130; that span reads EDLISTGGS. Residue Ser126 participates in orotate binding.

It belongs to the purine/pyrimidine phosphoribosyltransferase family. PyrE subfamily. As to quaternary structure, homodimer. Mg(2+) serves as cofactor.

The catalysed reaction is orotidine 5'-phosphate + diphosphate = orotate + 5-phospho-alpha-D-ribose 1-diphosphate. It participates in pyrimidine metabolism; UMP biosynthesis via de novo pathway; UMP from orotate: step 1/2. Functionally, catalyzes the transfer of a ribosyl phosphate group from 5-phosphoribose 1-diphosphate to orotate, leading to the formation of orotidine monophosphate (OMP). This is Orotate phosphoribosyltransferase from Streptococcus mutans serotype c (strain ATCC 700610 / UA159).